The chain runs to 1998 residues: Receptor-type tyrosine-protein phosphatase beta (1998 aa).

Residues 1-22 form the signal peptide; sequence MLRHGALTALWITLSVVQTGVA. Fibronectin type-III domains lie at 23–109, 113–206, 207–291, 292–384, 378–466, 470–556, 557–642, 643–733, 734–821, 822–913, 908–994, 995–1088, 1086–1173, 1176–1263, 1264–1357, 1358–1449, and 1449–1551; these read EQVK…VLQT, PPAR…VPSP, VKDL…TAPM, EVSN…VRNL, PEKV…QGRT, AVLQ…TVPA, QVTD…EGRT, VPSS…TVPD, KVQG…TIPE, PVKD…TVKN, PSTV…LGQT, VPAS…VPAA, PAAV…GRTV, AVNH…TAPS, PPSL…TKPD, KIQN…IDRP, and PPQP…KLGA. The Extracellular portion of the chain corresponds to 23–1622; the sequence is EQVKCNFTLL…ESEPLFGVIE (1600 aa). Residues Asn-28, Asn-53, Asn-75, Asn-173, Asn-199, and Asn-268 are each glycosylated (N-linked (GlcNAc...) asparagine). N-linked (GlcNAc...) asparagine glycosylation is found at Asn-415, Asn-422, Asn-480, Asn-575, Asn-599, and Asn-653. N-linked (GlcNAc...) asparagine glycosylation occurs at Asn-830. Asn-1041, Asn-1097, Asn-1164, Asn-1186, Asn-1213, Asn-1275, Asn-1368, Asn-1471, Asn-1475, and Asn-1519 each carry an N-linked (GlcNAc...) asparagine glycan. Residues 1623 to 1643 traverse the membrane as a helical segment; it reads GVSAGLFLIGMLVALVAFFIC. Topologically, residues 1644 to 1997 are cytoplasmic; sequence RQKASHSRER…EYHRDAIYSR (354 aa). One can recognise a Tyrosine-protein phosphatase domain in the interval 1704 to 1964; sequence LSKEYEDLKD…VYLHQCVRDV (261 aa). Residues Asp-1871, 1905 to 1911, and Gln-1949 contribute to the substrate site; that span reads CSAGVGR. The Phosphocysteine intermediate role is filled by Cys-1905. A Phosphotyrosine modification is found at Tyr-1982.

The protein belongs to the protein-tyrosine phosphatase family. Receptor class 3 subfamily. As to quaternary structure, monomer. Interacts with TEK. Interacts via fibronectin type-III 17 domain with CDH5. Detected in a complex with CNTN1 and NRCAM. Interacts (phosphorylated form) with FYN and GRB2. Interacts with IGFBP2. Expression is very high in the vasculature of lung, spleen, and kidney, as well as in the heart valves, and is also present in the endothelium of arterioles and venules. Also expressed in tumor vasculature.

The protein resides in the membrane. The enzyme catalyses O-phospho-L-tyrosyl-[protein] + H2O = L-tyrosyl-[protein] + phosphate. Functionally, plays an important role in blood vessel remodeling and angiogenesis. Not necessary for the initial formation of blood vessels, but is essential for their maintenance and remodeling. Can induce dephosphorylation of TEK/TIE2, CDH5/VE-cadherin and KDR/VEGFR-2. Regulates angiopoietin-TIE2 signaling in endothelial cells. Acts as a negative regulator of TIE2, and controls TIE2 driven endothelial cell proliferation, which in turn affects blood vessel remodeling during embryonic development and determines blood vessel size during perinatal growth. Essential for the maintenance of endothelial cell contact integrity and for the adhesive function of VE-cadherin in endothelial cells and this requires the presence of plakoglobin. The chain is Receptor-type tyrosine-protein phosphatase beta (Ptprb) from Mus musculus (Mouse).